Reading from the N-terminus, the 699-residue chain is Catalase-peroxidase (699 aa).

Positions 72-200 (WHSAGTYRIA…LAAVMMGLIY (129 aa)) form a cross-link, tryptophyl-tyrosyl-methioninium (Trp-Tyr) (with M-226). His-73 serves as the catalytic Proton acceptor. Residues 200–226 (YVNPEGVDGNPDPLKTAKDMRVTFARM) constitute a cross-link (tryptophyl-tyrosyl-methioninium (Tyr-Met) (with W-72)). His-241 lines the heme b pocket.

The protein belongs to the peroxidase family. Peroxidase/catalase subfamily. As to quaternary structure, homodimer or homotetramer. The cofactor is heme b. Post-translationally, formation of the three residue Trp-Tyr-Met cross-link is important for the catalase, but not the peroxidase activity of the enzyme.

It carries out the reaction H2O2 + AH2 = A + 2 H2O. It catalyses the reaction 2 H2O2 = O2 + 2 H2O. Bifunctional enzyme with both catalase and broad-spectrum peroxidase activity. The sequence is that of Catalase-peroxidase from Aeromonas salmonicida (strain A449).